The primary structure comprises 513 residues: ATP synthase subunit alpha (513 aa).

169–176 (GDRQTGKT) contacts ATP.

It belongs to the ATPase alpha/beta chains family. F-type ATPases have 2 components, CF(1) - the catalytic core - and CF(0) - the membrane proton channel. CF(1) has five subunits: alpha(3), beta(3), gamma(1), delta(1), epsilon(1). CF(0) has three main subunits: a(1), b(2) and c(9-12). The alpha and beta chains form an alternating ring which encloses part of the gamma chain. CF(1) is attached to CF(0) by a central stalk formed by the gamma and epsilon chains, while a peripheral stalk is formed by the delta and b chains.

Its subcellular location is the cell inner membrane. The enzyme catalyses ATP + H2O + 4 H(+)(in) = ADP + phosphate + 5 H(+)(out). In terms of biological role, produces ATP from ADP in the presence of a proton gradient across the membrane. The alpha chain is a regulatory subunit. The polypeptide is ATP synthase subunit alpha (Proteus mirabilis (strain HI4320)).